A 176-amino-acid polypeptide reads, in one-letter code: Interleukin-19 (176 aa).

An N-terminal signal peptide occupies residues 1 to 24; that stretch reads MKTQCASTWLLGMTLILCSVHIYS. Intrachain disulfides connect Cys-28/Cys-120, Cys-74/Cys-126, and Cys-75/Cys-128. A glycan (N-linked (GlcNAc...) asparagine) is linked at Asn-56. Residues Asn-127 and Asn-134 are each glycosylated (N-linked (GlcNAc...) asparagine).

It belongs to the IL-10 family.

The protein resides in the secreted. Cytokine that functions as an anti-inflammatory and proangiogenic factor. Polarizes adaptive immunity to an anti-inflammatory phenotype through induction of T-helper 2 responses by both down-regulation of IFN-gamma and up-regulation of IL4 and IL5. Produced by osteocytes, stimulates granulopoiesis and neutrophil formation. Exerts its biological effect through a receptor complex consisting of a heterodimer of IL20RA and IL20RB. In turn, activates the Janus kinase (JAK) and signal transducer and activator of transcription (STAT) pathway, and importantly, STAT3. The sequence is that of Interleukin-19 (Il19) from Mus musculus (Mouse).